We begin with the raw amino-acid sequence, 41 residues long: Large ribosomal subunit protein bL36 (41 aa).

This sequence belongs to the bacterial ribosomal protein bL36 family.

This is Large ribosomal subunit protein bL36 from Methylocella silvestris (strain DSM 15510 / CIP 108128 / LMG 27833 / NCIMB 13906 / BL2).